Consider the following 299-residue polypeptide: Protease HtpX homolog (299 aa).

2 consecutive transmembrane segments (helical) span residues 14–34 (WLLL…VGYL) and 39–59 (GFGG…TMIF). Zn(2+) is bound at residue H143. Residue E144 is part of the active site. H147 contacts Zn(2+). Transmembrane regions (helical) follow at residues 153–173 (IRIS…AVMA) and 198–218 (IILL…ATLV). Position 227 (E227) interacts with Zn(2+).

It belongs to the peptidase M48B family. Zn(2+) serves as cofactor.

The protein localises to the cell membrane. In Streptococcus thermophilus (strain CNRZ 1066), this protein is Protease HtpX homolog.